The sequence spans 504 residues: tRNA (uracil-5-)-methyltransferase homolog B (504 aa).

The transit peptide at 1–16 directs the protein to the mitochondrion; sequence MAGLKRRVPLHSLRYF. Residues Gln323, Glu373, and Asn423 each contribute to the S-adenosyl-L-methionine site. Catalysis depends on Cys451, which acts as the Nucleophile. Residue Glu497 is the Proton acceptor of the active site.

It belongs to the class I-like SAM-binding methyltransferase superfamily. RNA M5U methyltransferase family.

The protein resides in the mitochondrion. Its subcellular location is the mitochondrion matrix. The catalysed reaction is uridine(54) in tRNA + S-adenosyl-L-methionine = 5-methyluridine(54) in tRNA + S-adenosyl-L-homocysteine + H(+). It carries out the reaction a uridine in 12S rRNA + S-adenosyl-L-methionine = a 5-methyluridine in 12S rRNA + S-adenosyl-L-homocysteine + H(+). In terms of biological role, mitochondrial S-adenosyl-L-methionine-dependent methyltransferase that catalyzes the formation of 5-methyl-uridine in tRNAs and 12S rRNA. Catalyzes the methylation of uridine at position 54 (m5U54) in all tRNAs. Specifically methylates the uridine in position 429 of 12S rRNA (m5U429). Does not affect RNA stability or mitochondrial translation. The polypeptide is tRNA (uracil-5-)-methyltransferase homolog B (Homo sapiens (Human)).